Consider the following 88-residue polypeptide: Small ribosomal subunit protein uS15 (88 aa).

Belongs to the universal ribosomal protein uS15 family. Part of the 30S ribosomal subunit. Forms a bridge to the 50S subunit in the 70S ribosome, contacting the 23S rRNA.

One of the primary rRNA binding proteins, it binds directly to 16S rRNA where it helps nucleate assembly of the platform of the 30S subunit by binding and bridging several RNA helices of the 16S rRNA. In terms of biological role, forms an intersubunit bridge (bridge B4) with the 23S rRNA of the 50S subunit in the ribosome. This chain is Small ribosomal subunit protein uS15, found in Borrelia turicatae (strain 91E135).